A 344-amino-acid polypeptide reads, in one-letter code: tRNA N6-adenosine threonylcarbamoyltransferase (344 aa).

The Fe cation site is built by His119 and His123. Residues 141 to 145 (VVSGG), Asp174, Gly187, Asp191, and Asn280 each bind substrate. Fe cation is bound at residue Asp310.

This sequence belongs to the KAE1 / TsaD family. It depends on Fe(2+) as a cofactor.

Its subcellular location is the cytoplasm. The catalysed reaction is L-threonylcarbamoyladenylate + adenosine(37) in tRNA = N(6)-L-threonylcarbamoyladenosine(37) in tRNA + AMP + H(+). Its function is as follows. Required for the formation of a threonylcarbamoyl group on adenosine at position 37 (t(6)A37) in tRNAs that read codons beginning with adenine. Is involved in the transfer of the threonylcarbamoyl moiety of threonylcarbamoyl-AMP (TC-AMP) to the N6 group of A37, together with TsaE and TsaB. TsaD likely plays a direct catalytic role in this reaction. The protein is tRNA N6-adenosine threonylcarbamoyltransferase of Listeria monocytogenes serovar 1/2a (strain ATCC BAA-679 / EGD-e).